The sequence spans 200 residues: Cell division protein SepF (200 aa).

Disordered regions lie at residues 35-60 (NLYQ…RWRE) and 170-200 (LHEV…RMAQ). Positions 183-200 (PTGSPNQTWGNETNRMAQ) are enriched in polar residues.

This sequence belongs to the SepF family. Homodimer. Interacts with FtsZ.

The protein resides in the cytoplasm. In terms of biological role, cell division protein that is part of the divisome complex and is recruited early to the Z-ring. Probably stimulates Z-ring formation, perhaps through the cross-linking of FtsZ protofilaments. Its function overlaps with FtsA. The protein is Cell division protein SepF of Nostoc punctiforme (strain ATCC 29133 / PCC 73102).